A 301-amino-acid chain; its full sequence is Ribonuclease HIII (301 aa).

Residues 88-301 (RPRIGVDESG…TFYEVLGSTS (214 aa)) form the RNase H type-2 domain. Aspartate 94, glutamate 95, and aspartate 198 together coordinate a divalent metal cation.

Belongs to the RNase HII family. RnhC subfamily. The cofactor is Mn(2+). Requires Mg(2+) as cofactor.

The protein localises to the cytoplasm. The enzyme catalyses Endonucleolytic cleavage to 5'-phosphomonoester.. In terms of biological role, endonuclease that specifically degrades the RNA of RNA-DNA hybrids. The polypeptide is Ribonuclease HIII (rnhC) (Chlamydia muridarum (strain MoPn / Nigg)).